Consider the following 116-residue polypeptide: NADPH-dependent 7-cyano-7-deazaguanine reductase (116 aa).

The active-site Thioimide intermediate is Cys-31. The Proton donor role is filled by Asp-38. Substrate is bound by residues 53–55 (IEL) and 72–73 (YE).

The protein belongs to the GTP cyclohydrolase I family. QueF type 1 subfamily.

Its subcellular location is the cytoplasm. The enzyme catalyses 7-aminomethyl-7-carbaguanine + 2 NADP(+) = 7-cyano-7-deazaguanine + 2 NADPH + 3 H(+). It participates in tRNA modification; tRNA-queuosine biosynthesis. Functionally, catalyzes the NADPH-dependent reduction of 7-cyano-7-deazaguanine (preQ0) to 7-aminomethyl-7-deazaguanine (preQ1). This is NADPH-dependent 7-cyano-7-deazaguanine reductase from Chlorobium luteolum (strain DSM 273 / BCRC 81028 / 2530) (Pelodictyon luteolum).